The following is a 116-amino-acid chain: Nucleoid-associated protein PMT9312_0020 (116 aa).

It belongs to the YbaB/EbfC family. As to quaternary structure, homodimer.

The protein resides in the cytoplasm. Its subcellular location is the nucleoid. Functionally, binds to DNA and alters its conformation. May be involved in regulation of gene expression, nucleoid organization and DNA protection. The sequence is that of Nucleoid-associated protein PMT9312_0020 from Prochlorococcus marinus (strain MIT 9312).